A 168-amino-acid polypeptide reads, in one-letter code: ATP synthase subunit d, mitochondrial (168 aa).

This sequence belongs to the ATPase d subunit family. In terms of assembly, F-type ATPases have 2 components, CF(1) - the catalytic core - and CF(0) - the membrane proton channel. CF(0) seems to have nine subunits: a, b, c, d, e, f, g, F6 and 8 (or A6L).

The protein resides in the mitochondrion. It is found in the mitochondrion inner membrane. Functionally, mitochondrial membrane ATP synthase (F(1)F(0) ATP synthase or Complex V) produces ATP from ADP in the presence of a proton gradient across the membrane which is generated by electron transport complexes of the respiratory chain. F-type ATPases consist of two structural domains, F(1) - containing the extramembraneous catalytic core, and F(0) - containing the membrane proton channel, linked together by a central stalk and a peripheral stalk. During catalysis, ATP synthesis in the catalytic domain of F(1) is coupled via a rotary mechanism of the central stalk subunits to proton translocation. Part of the complex F(0) domain and the peripheric stalk, which acts as a stator to hold the catalytic alpha(3)beta(3) subcomplex and subunit a/ATP6 static relative to the rotary elements. This Arabidopsis thaliana (Mouse-ear cress) protein is ATP synthase subunit d, mitochondrial.